Here is a 246-residue protein sequence, read N- to C-terminus: MADS-box transcription factor 14 (246 aa).

The MADS-box domain maps to 1–61; the sequence is MGRGKVQLKR…GKLYEYATDS (61 aa). The region spanning 88-178 is the K-box domain; sequence QGNWCHEYRK…QKELVEKQKV (91 aa). The disordered stretch occupies residues 180–199; that stretch reads KQQVQWDQTQPQTSSSSSSF.

As to quaternary structure, may interact with the K-box of MADS1 and MADS6. In terms of tissue distribution, highly expressed in sterile lemmas, at intermediate levels in stamens, and weakly in lemmas, paleas and carpels.

The protein resides in the nucleus. Probable transcription factor. May be involved in the control of flowering time. The protein is MADS-box transcription factor 14 (MADS14) of Oryza sativa subsp. japonica (Rice).